The chain runs to 89 residues: Small ribosomal subunit protein uS15 (89 aa).

Belongs to the universal ribosomal protein uS15 family. As to quaternary structure, part of the 30S ribosomal subunit. Forms a bridge to the 50S subunit in the 70S ribosome, contacting the 23S rRNA.

Its function is as follows. One of the primary rRNA binding proteins, it binds directly to 16S rRNA where it helps nucleate assembly of the platform of the 30S subunit by binding and bridging several RNA helices of the 16S rRNA. Functionally, forms an intersubunit bridge (bridge B4) with the 23S rRNA of the 50S subunit in the ribosome. This is Small ribosomal subunit protein uS15 from Corynebacterium aurimucosum (strain ATCC 700975 / DSM 44827 / CIP 107346 / CN-1) (Corynebacterium nigricans).